A 230-amino-acid chain; its full sequence is MVRDTRNVDLEWGLELCKPEKVNKQNLFTNIIKPQKDKINIKTDKIKFFLDNLFTEFSKFHDSCYPDGRISTRSKLRWPLLIIWCILIVFAIDKNFEVKDFLSIWINESFINENRFYSEIWGPIAIYICLFVLLLLGLIYCSKIVVKAIPLISIVIAAVVVIIAVAMVKILYICHWLIYKILILAFGIKVKPLGDTLPTHNGETGSHSKATVGSDIEQIEFQNMPTPVKK.

Helical transmembrane passes span Trp78–Val98, Ile120–Tyr140, and Ala148–Val168.

Belongs to the UPF0494 family.

Its subcellular location is the membrane. The sequence is that of UPF0494 membrane protein PB2B2.14c from Schizosaccharomyces pombe (strain 972 / ATCC 24843) (Fission yeast).